Reading from the N-terminus, the 95-residue chain is Aspartyl/glutamyl-tRNA(Asn/Gln) amidotransferase subunit C (95 aa).

Belongs to the GatC family. As to quaternary structure, heterotrimer of A, B and C subunits.

It catalyses the reaction L-glutamyl-tRNA(Gln) + L-glutamine + ATP + H2O = L-glutaminyl-tRNA(Gln) + L-glutamate + ADP + phosphate + H(+). The enzyme catalyses L-aspartyl-tRNA(Asn) + L-glutamine + ATP + H2O = L-asparaginyl-tRNA(Asn) + L-glutamate + ADP + phosphate + 2 H(+). Allows the formation of correctly charged Asn-tRNA(Asn) or Gln-tRNA(Gln) through the transamidation of misacylated Asp-tRNA(Asn) or Glu-tRNA(Gln) in organisms which lack either or both of asparaginyl-tRNA or glutaminyl-tRNA synthetases. The reaction takes place in the presence of glutamine and ATP through an activated phospho-Asp-tRNA(Asn) or phospho-Glu-tRNA(Gln). The sequence is that of Aspartyl/glutamyl-tRNA(Asn/Gln) amidotransferase subunit C from Halothermothrix orenii (strain H 168 / OCM 544 / DSM 9562).